The primary structure comprises 318 residues: Glycerol 2-dehydrogenase (NADP(+)) (318 aa).

Tyr52 functions as the Proton donor in the catalytic mechanism. His115 contributes to the substrate binding site. 217–277 provides a ligand contact to NADP(+); that stretch reads SPLGSQNQVP…SSTPSRIESN (61 aa).

It belongs to the aldo/keto reductase family.

It carries out the reaction glycerol + NADP(+) = dihydroxyacetone + NADPH + H(+). Functionally, glycerol oxidoreductase probably involved in glycerol synthesis. The sequence is that of Glycerol 2-dehydrogenase (NADP(+)) (gld2) from Hypocrea jecorina (Trichoderma reesei).